We begin with the raw amino-acid sequence, 379 residues long: Cyclin-dependent kinase-like 4 (379 aa).

A Protein kinase domain is found at 4–286 (YEKLAKTGEG…CSQLLESSYF (283 aa)). ATP is bound by residues 10 to 18 (TGEGSYGVV) and Lys-33. Residues 45–51 (KKIALRE) carry the [NKR]KIAxRE motif. The active-site Proton acceptor is the Asp-126.

The protein belongs to the protein kinase superfamily. CMGC Ser/Thr protein kinase family. CDC2/CDKX subfamily.

It is found in the cytoplasm. The catalysed reaction is L-seryl-[protein] + ATP = O-phospho-L-seryl-[protein] + ADP + H(+). It carries out the reaction L-threonyl-[protein] + ATP = O-phospho-L-threonyl-[protein] + ADP + H(+). This chain is Cyclin-dependent kinase-like 4 (CDKL4), found in Homo sapiens (Human).